Reading from the N-terminus, the 355-residue chain is MSEISAQLVKKLRDLTDVGMMDCKKALVEVAGDLQKAIDFLREKGLSKAAKKADRIASEGVVALEVAPDFKSAVMVEINSETDFVAKNEGFKELVKKTLETIKVHNAHTREELLKSSLDNKPFEEYLHSQIAVIGENILVRKIANSKAPSSHIINGYAHSNARVGVLITMKYNNEKNAPKAVELARNIAMHAAAMKPQVLDCKDFSLDFVKKETLVLIAEIEKDNEEAKRLGKPLKNIPTFGSRIELSDEVLAHQKKVFEDELKEQGKPEKIWDKIVLGKMERFIADNTLIDQRLTLLGQFYVMDDKKTIAQVIADYSKELNDTLEITEYVRFELGEGIEKKAENFAEEVALQMK.

The involved in Mg(2+) ion dislocation from EF-Tu stretch occupies residues 82–85; that stretch reads TDFV.

Belongs to the EF-Ts family.

The protein localises to the cytoplasm. Associates with the EF-Tu.GDP complex and induces the exchange of GDP to GTP. It remains bound to the aminoacyl-tRNA.EF-Tu.GTP complex up to the GTP hydrolysis stage on the ribosome. This is Elongation factor Ts from Helicobacter acinonychis (strain Sheeba).